The chain runs to 656 residues: Chaperone protein DnaK (656 aa).

Residues 590-605 (GGAAGGAAGGAAGGAA) show a composition bias toward gly residues. The tract at residues 590 to 656 (GGAAGGAAGG…DGQPKPGPAA (67 aa)) is disordered. Residues 606–621 (GDAAGAAGDSTGDAAG) are compositionally biased toward low complexity. Residues 622–635 (AAGGPSEGPAGDAG) are compositionally biased toward gly residues.

It belongs to the heat shock protein 70 family.

Functionally, acts as a chaperone. The protein is Chaperone protein DnaK of Cenarchaeum symbiosum (strain A).